A 355-amino-acid polypeptide reads, in one-letter code: Lipopolysaccharide heptosyltransferase 1 (355 aa).

ADP-L-glycero-beta-D-manno-heptose contacts are provided by T186, T187, K191, E221, D260, T261, G262, and H265.

It belongs to the glycosyltransferase 9 family.

The protein localises to the cell inner membrane. The enzyme catalyses an alpha-Kdo-(2-&gt;4)-alpha-Kdo-(2-&gt;6)-lipid A + ADP-L-glycero-beta-D-manno-heptose = an L-alpha-D-Hep-(1-&gt;5)-[alpha-Kdo-(2-&gt;4)]-alpha-Kdo-(2-&gt;6)-lipid A + ADP + H(+). The protein operates within bacterial outer membrane biogenesis; LPS core biosynthesis. In terms of biological role, glycosyltransferase involved in the biosynthesis of the core oligosaccharide region of lipopolysaccharide (LPS). Catalyzes the addition of the first heptose unit to one 3-deoxy-D-manno-octulosonic acid (Kdo) residue of the Kdo2-lipid A module. The sequence is that of Lipopolysaccharide heptosyltransferase 1 from Pseudomonas aeruginosa (strain ATCC 15692 / DSM 22644 / CIP 104116 / JCM 14847 / LMG 12228 / 1C / PRS 101 / PAO1).